Consider the following 775-residue polypeptide: Kojibiose phosphorylase (775 aa).

361–362 (WD) contacts substrate. Catalysis depends on Glu501, which acts as the Proton donor. Residue 614-615 (KQ) participates in substrate binding.

The protein belongs to the glycosyl hydrolase 65 family. In terms of assembly, homohexamer.

The enzyme catalyses kojibiose + phosphate = beta-D-glucose 1-phosphate + D-glucose. Inhibited by Hg(2+) and Pb(2+). Functionally, catalyzes the reversible phosphorolysis of kojibiose into beta-D-glucose 1-phosphate (Glc1P) and D-glucose. Can act with alpha-1,2-oligoglucans, such as selaginose, but more slowly. Inactive when disaccharides with linkages other than alpha-1,2 linkages, such as sophorose, trehalose, neotrehalose, nigerose, laminaribiose, maltose, cellobiose, isomaltose, gentiobiose, sucrose and lactose, are used as substrates. In contrast, shows broad specificity for the reverse reaction. Various monosaccharides and disaccharides having a glucosyl residue at the non-reducing end are effective acceptors. The chain is Kojibiose phosphorylase from Thermoanaerobacter brockii (Thermoanaerobium brockii).